Consider the following 294-residue polypeptide: MSRLFEGVGVALTTPFTNNEIDYEALEKHVDYLLNNNIQSIVVNGTTAENPTLSDEEKDEVLKAVVKQVDGRVPVIAGTGTNATKKSLEASLRAKEIGADAIMLITPYYNKTSQRGLVAHFTTIADAVGLPVVLYNVPSRTNMTIDVDTMVELAKNPFIVAIKDATNDFDYHNKLKERLDLSDFSLYSGNDDNVVRYFAEGGNGVISVVANAIPGDFQALYEKSKRGEAIDKDFEPISRLLNALSVDVNPIPIKALTAVEGFGNYEVRLPLVTLESSDRKQLEEAYAKYKAGEL.

A pyruvate-binding site is contributed by threonine 47. The Proton donor/acceptor role is filled by tyrosine 135. Lysine 163 functions as the Schiff-base intermediate with substrate in the catalytic mechanism. Isoleucine 206 is a binding site for pyruvate.

This sequence belongs to the DapA family. As to quaternary structure, homodimer.

It localises to the cytoplasm. It carries out the reaction L-aspartate 4-semialdehyde + pyruvate = (2S,4S)-4-hydroxy-2,3,4,5-tetrahydrodipicolinate + H2O + H(+). The protein operates within amino-acid biosynthesis; L-lysine biosynthesis via DAP pathway; (S)-tetrahydrodipicolinate from L-aspartate: step 3/4. In terms of biological role, catalyzes the condensation of (S)-aspartate-beta-semialdehyde [(S)-ASA] and pyruvate to 4-hydroxy-tetrahydrodipicolinate (HTPA). This chain is 4-hydroxy-tetrahydrodipicolinate synthase, found in Staphylococcus carnosus (strain TM300).